We begin with the raw amino-acid sequence, 217 residues long: 3,4-dihydroxy-2-butanone 4-phosphate synthase (217 aa).

D-ribulose 5-phosphate contacts are provided by residues 37 to 38 (RE), Asp42, 150 to 154 (RRGHT), and Glu174. Glu38 is a Mg(2+) binding site. His153 lines the Mg(2+) pocket.

The protein belongs to the DHBP synthase family. In terms of assembly, homodimer. Mg(2+) serves as cofactor. It depends on Mn(2+) as a cofactor.

It catalyses the reaction D-ribulose 5-phosphate = (2S)-2-hydroxy-3-oxobutyl phosphate + formate + H(+). The protein operates within cofactor biosynthesis; riboflavin biosynthesis; 2-hydroxy-3-oxobutyl phosphate from D-ribulose 5-phosphate: step 1/1. Its function is as follows. Catalyzes the conversion of D-ribulose 5-phosphate to formate and 3,4-dihydroxy-2-butanone 4-phosphate. The chain is 3,4-dihydroxy-2-butanone 4-phosphate synthase from Shewanella baltica (strain OS223).